Consider the following 502-residue polypeptide: Probable cytosol aminopeptidase 2 (502 aa).

Positions 269 and 274 each coordinate Mn(2+). The active site involves Lys281. Mn(2+)-binding residues include Asp292, Asp351, and Glu353. Arg355 is a catalytic residue.

Belongs to the peptidase M17 family. Mn(2+) is required as a cofactor.

Its subcellular location is the cytoplasm. It carries out the reaction Release of an N-terminal amino acid, Xaa-|-Yaa-, in which Xaa is preferably Leu, but may be other amino acids including Pro although not Arg or Lys, and Yaa may be Pro. Amino acid amides and methyl esters are also readily hydrolyzed, but rates on arylamides are exceedingly low.. The enzyme catalyses Release of an N-terminal amino acid, preferentially leucine, but not glutamic or aspartic acids.. Presumably involved in the processing and regular turnover of intracellular proteins. Catalyzes the removal of unsubstituted N-terminal amino acids from various peptides. In Shewanella oneidensis (strain ATCC 700550 / JCM 31522 / CIP 106686 / LMG 19005 / NCIMB 14063 / MR-1), this protein is Probable cytosol aminopeptidase 2 (pepA2).